The primary structure comprises 232 residues: Secreted LysM effector Mg3LysM (232 aa).

Residues 1 to 16 form the signal peptide; it reads MQNIFLAATLLGAAFA. The region spanning 47–91 is the LysM 1 domain; the sequence is TNYTVKAGDTLGAIAKQYNSGVCDIAKVNGIDNPDYIKPDQVLSI. N-linked (GlcNAc...) asparagine glycosylation is found at Asn-48, Asn-100, Asn-138, Asn-195, Asn-209, and Asn-227. 2 LysM domains span residues 120-165 and 177-221; these read STYT…VINT and GTYV…IIIL.

This sequence belongs to the secreted LysM effector family.

Its function is as follows. Secreted effector that enables the plant pathogenic fungus to manipulate host defenses for successful infection. Binds chitin fragments and blocks the activation of chitin-induced plant defense responses. Protects fungal hyphae against hydrolytic plant enzymes. The sequence is that of Secreted LysM effector Mg3LysM from Zymoseptoria tritici (strain CBS 115943 / IPO323) (Speckled leaf blotch fungus).